The sequence spans 639 residues: Chaperone protein DnaK (639 aa).

The residue at position 198 (Thr198) is a Phosphothreonine; by autocatalysis. The span at 603–618 (AKAQTQGGAQEGAAKQ) shows a compositional bias: low complexity. Residues 603–639 (AKAQTQGGAQEGAAKQSNATADDVVDAEFEEVKDDKK) form a disordered region. Residues 625 to 639 (DVVDAEFEEVKDDKK) show a composition bias toward acidic residues.

Belongs to the heat shock protein 70 family.

In terms of biological role, acts as a chaperone. The protein is Chaperone protein DnaK of Shewanella sp. (strain MR-4).